A 619-amino-acid chain; its full sequence is ATP-dependent zinc metalloprotease FtsH 1 (619 aa).

Over 1-8 the chain is Cytoplasmic; it reads MADEKRPA. Residues 9-29 form a helical membrane-spanning segment; it reads SRAWLGYLLIAVGILVLSGIV. At 30–108 the chain is on the periplasmic side; the sequence is RSRGRPLVPY…RIEAKSPQTS (79 aa). A helical membrane pass occupies residues 109–129; it reads VWMQVAIWMLPLVLINAAFFM. Topologically, residues 130-619 are cytoplasmic; sequence MLRRAGQGAG…KIAVGPPSAA (490 aa). Position 203-210 (203-210) interacts with ATP; it reads GPPGTGKT. Histidine 426 contacts Zn(2+). Residue glutamate 427 is part of the active site. The Zn(2+) site is built by histidine 430 and aspartate 503.

In the central section; belongs to the AAA ATPase family. The protein in the C-terminal section; belongs to the peptidase M41 family. Homohexamer. The cofactor is Zn(2+).

The protein resides in the cell inner membrane. In terms of biological role, acts as a processive, ATP-dependent zinc metallopeptidase for both cytoplasmic and membrane proteins. Plays a role in the quality control of integral membrane proteins. The sequence is that of ATP-dependent zinc metalloprotease FtsH 1 from Sorangium cellulosum (strain So ce56) (Polyangium cellulosum (strain So ce56)).